Here is a 332-residue protein sequence, read N- to C-terminus: D-lactate dehydrogenase (332 aa).

Residues 155-156 (RI), Asp175, 206-207 (VP), Asn212, and 233-235 (FAR) contribute to the NAD(+) site. Residues Arg235 and Glu264 contribute to the active site. His296 serves as the catalytic Proton donor.

Belongs to the D-isomer specific 2-hydroxyacid dehydrogenase family. Homodimer.

The catalysed reaction is (R)-lactate + NAD(+) = pyruvate + NADH + H(+). The protein is D-lactate dehydrogenase of Lactiplantibacillus pentosus (Lactobacillus pentosus).